Reading from the N-terminus, the 881-residue chain is Lon protease (881 aa).

Residues 1–24 are compositionally biased toward basic and acidic residues; it reads MAKNTDIEHDAHEPAGHGDVRESA. The interval 1–77 is disordered; sequence MAKNTDIEHD…RAGEAEKGVP (77 aa). The segment covering 49 to 59 has biased composition (polar residues); sequence QTDTESAQGAA. Basic and acidic residues predominate over residues 65–77; that stretch reads EVQRAGEAEKGVP. The region spanning 94–287 is the Lon N-terminal domain; it reads VHLIPLTGRP…EVFVYIKKEK (194 aa). Residue 440–447 coordinates ATP; that stretch reads GPPGVGKT. In terms of domain architecture, Lon proteolytic spans 679–861; the sequence is ANKVGTAVGL…EEVLSLAFPK (183 aa). Residues S767 and K810 contribute to the active site.

This sequence belongs to the peptidase S16 family. In terms of assembly, homohexamer. Organized in a ring with a central cavity.

It localises to the cytoplasm. The enzyme catalyses Hydrolysis of proteins in presence of ATP.. ATP-dependent serine protease that mediates the selective degradation of mutant and abnormal proteins as well as certain short-lived regulatory proteins. Required for cellular homeostasis and for survival from DNA damage and developmental changes induced by stress. Degrades polypeptides processively to yield small peptide fragments that are 5 to 10 amino acids long. Binds to DNA in a double-stranded, site-specific manner. The polypeptide is Lon protease (Treponema pallidum (strain Nichols)).